We begin with the raw amino-acid sequence, 1010 residues long: Contactin-1 (1010 aa).

The N-terminal stretch at Met1 to Asp19 is a signal peptide. 6 Ig-like C2-type domains span residues Pro33–Ser123, Pro132–Phe215, Pro232–Tyr317, Pro322–Lys398, Pro404–Glu491, and Thr496–Arg592. Disulfide bonds link Cys57–Cys106 and Cys150–Cys203. N-linked (GlcNAc...) asparagine glycosylation is found at Asn200 and Asn249. Cys254 and Cys301 are joined by a disulfide. Asn329 carries an N-linked (GlcNAc...) asparagine glycan. 2 cysteine pairs are disulfide-bonded: Cys343–Cys382 and Cys427–Cys475. N-linked (GlcNAc...) asparagine glycosylation is found at Asn448, Asn464, Asn485, and Asn512. The cysteines at positions 517 and 574 are disulfide-linked. An N-linked (GlcNAc...) asparagine glycan is attached at Asn582. 4 Fibronectin type-III domains span residues Pro597–Ala695, Ala700–Asp797, Val802–Ser897, and Arg899–Val990. The span at Gly679 to Arg689 shows a compositional bias: polar residues. A disordered region spans residues Gly679–Gly708. A glycan (N-linked (GlcNAc...) asparagine) is linked at Asn924. A lipid anchor (GPI-anchor amidated serine) is attached at Ser984. The propeptide at Gly985–Phe1010 is removed in mature form.

It belongs to the immunoglobulin superfamily. Contactin family. As to quaternary structure, interacts with TNR.

The protein resides in the cell membrane. Mediates cell surface interactions during nervous system development. Interaction with TNR enhances the neurite outgrowth. This is Contactin-1 (CNTN1) from Gallus gallus (Chicken).